Here is a 145-residue protein sequence, read N- to C-terminus: Anaerobic nitrite reductase NSHB5 (145 aa).

The 141-residue stretch at 2 to 142 (GFSETQEELV…LAAAIKEEMK (141 aa)) folds into the Globin domain. The Homodimerization signature appears at 35-39 (EIAPA). Ser-45, His-59, Lys-61, Arg-84, Thr-88, and His-89 together coordinate heme b. The short motif at 96 to 108 (DAHFEVVKTALLD) is the Homodimerization element.

The protein belongs to the plant globin family. In terms of assembly, homodimer. It depends on heme b as a cofactor. As to expression, expressed in embryonic (embryos, coleoptiles and seminal roots) and vegetative (leaves and roots) organs.

The protein localises to the cytoplasm. It localises to the nucleus. It catalyses the reaction Fe(III)-heme b-[protein] + nitric oxide + H2O = Fe(II)-heme b-[protein] + nitrite + 2 H(+). In terms of biological role, phytoglobin that reduces nitrite to nitric oxide under anoxic conditions (e.g. during flooding or in waterlogged soil). May not function as an oxygen storage or transport protein. Has an unusually high affinity for O(2) through an hexacoordinate heme iron because of a very low dissociation constant. The polypeptide is Anaerobic nitrite reductase NSHB5 (Oryza sativa subsp. indica (Rice)).